The chain runs to 192 residues: Adenylate kinase (192 aa).

Residue glycine 10–threonine 18 participates in ATP binding.

The protein belongs to the archaeal adenylate kinase family. In terms of assembly, monomer.

It is found in the cytoplasm. It carries out the reaction AMP + ATP = 2 ADP. This Methanococcus voltae protein is Adenylate kinase (adkA).